The chain runs to 267 residues: Glutamate 5-kinase (267 aa).

Residue lysine 14 participates in ATP binding. The substrate site is built by serine 54, aspartate 141, and asparagine 157. Residues 177–178 (SD) and 219–225 (TGGMLSK) each bind ATP.

Belongs to the glutamate 5-kinase family.

It localises to the cytoplasm. The catalysed reaction is L-glutamate + ATP = L-glutamyl 5-phosphate + ADP. It participates in amino-acid biosynthesis; L-proline biosynthesis; L-glutamate 5-semialdehyde from L-glutamate: step 1/2. In terms of biological role, catalyzes the transfer of a phosphate group to glutamate to form L-glutamate 5-phosphate. This Streptococcus agalactiae serotype Ia (strain ATCC 27591 / A909 / CDC SS700) protein is Glutamate 5-kinase.